A 628-amino-acid polypeptide reads, in one-letter code: tRNA uridine 5-carboxymethylaminomethyl modification enzyme MnmG (628 aa).

Residue 14–19 (GAGHAG) coordinates FAD. Residue 274–288 (GPRYCPSIEDKIVRF) coordinates NAD(+).

This sequence belongs to the MnmG family. As to quaternary structure, homodimer. Heterotetramer of two MnmE and two MnmG subunits. The cofactor is FAD.

It is found in the cytoplasm. Its function is as follows. NAD-binding protein involved in the addition of a carboxymethylaminomethyl (cmnm) group at the wobble position (U34) of certain tRNAs, forming tRNA-cmnm(5)s(2)U34. The chain is tRNA uridine 5-carboxymethylaminomethyl modification enzyme MnmG from Clostridium kluyveri (strain ATCC 8527 / DSM 555 / NBRC 12016 / NCIMB 10680 / K1).